The chain runs to 247 residues: MQTQVLFEHPLNEKMRTWLRIEFLIQQLTVNLPIADHAGALHFFRNVSELLDVFERGEVRTELLKELDRQQRKLQTWIGVPGVDQSRIEALIQQLKAAGSVLISAPRIGQFLREDRLIALVRQRLSIPGGCCSFDLPTLHIWLHLPQAQRDSQVETWIASLNPLTQALTMVLDLIRQSAPFRKQTSLNGFYQDNGGDADLLRLNLSLDSQLYPQISGHKSRFAIRFMPLDTENGQVPERLDFELACC.

Belongs to the ZapD family. Interacts with FtsZ.

It localises to the cytoplasm. Functionally, cell division factor that enhances FtsZ-ring assembly. Directly interacts with FtsZ and promotes bundling of FtsZ protofilaments, with a reduction in FtsZ GTPase activity. This Shigella dysenteriae serotype 1 (strain Sd197) protein is Cell division protein ZapD.